The chain runs to 508 residues: MSVELWQQCVELLRDELPAQQFNTWIRPLQVEAEGDELRVYAPNRFVLDWVNEKYLGRLLELLGEHGNGLAPALSLLIGSRRSSAPRAAPNAPVSAAVAATMAQQTQQAAQVVVPSEPIVVPVAEPVLSEVEEPSSRDSFDSMSDSGSVPAASGRTEQRTVQVEGALKHTSYLNRTFTFETFVEGKSNQLARAAAWQVADNPKHGYNPLFLYGGVGLGKTHLMHAVGNHLLKKNPNAKVVYLHSERFVADMVKALQLNAINEFKRFYRSVDALLIDDIQFFARKERSQEEFFHTFNALLEGGQQVILTSDRYPKEIEGLEERLKSRFGWGLTVAVEPPELETRVAILMKKADQAKVELPHDAAFFIAQRIRSNVRELEGALKRVIAHSHFMGRDITIELIRESLKDLLALQDKLVSVDNIQRTVAEYYKIKISDLLSKRRSRSVARPRQVAMALSKELTNHSLPEIGDMFGGRDHTTVLHACRKINELKESDADIREDYKNLLRTLTT.

The interval 1–90 (MSVELWQQCV…RRSSAPRAAP (90 aa)) is domain I, interacts with DnaA modulators. The domain II stretch occupies residues 91 to 171 (NAPVSAAVAA…QVEGALKHTS (81 aa)). The segment at 130 to 160 (EVEEPSSRDSFDSMSDSGSVPAASGRTEQRT) is disordered. The segment at 172–388 (YLNRTFTFET…GALKRVIAHS (217 aa)) is domain III, AAA+ region. Residues G216, G218, K219, and T220 each contribute to the ATP site. The segment at 389-508 (HFMGRDITIE…YKNLLRTLTT (120 aa)) is domain IV, binds dsDNA.

The protein belongs to the DnaA family. Oligomerizes as a right-handed, spiral filament on DNA at oriC.

The protein localises to the cytoplasm. In terms of biological role, plays an essential role in the initiation and regulation of chromosomal replication. ATP-DnaA binds to the origin of replication (oriC) to initiate formation of the DNA replication initiation complex once per cell cycle. Binds the DnaA box (a 9 base pair repeat at the origin) and separates the double-stranded (ds)DNA. Forms a right-handed helical filament on oriC DNA; dsDNA binds to the exterior of the filament while single-stranded (ss)DNA is stabiized in the filament's interior. The ATP-DnaA-oriC complex binds and stabilizes one strand of the AT-rich DNA unwinding element (DUE), permitting loading of DNA polymerase. After initiation quickly degrades to an ADP-DnaA complex that is not apt for DNA replication. Binds acidic phospholipids. The chain is Chromosomal replication initiator protein DnaA from Pseudomonas entomophila (strain L48).